Consider the following 329-residue polypeptide: UDP-N-acetylenolpyruvoylglucosamine reductase (329 aa).

Positions 28 to 192 constitute an FAD-binding PCMH-type domain; sequence RVGGPADLLC…ARVEVRLHPG (165 aa). The active site involves arginine 172. Serine 221 acts as the Proton donor in catalysis. The active site involves glutamate 291. The interval 307-329 is disordered; sequence DGHAAAGGGPGAASGGVRPPEAT. Residues 311-320 are compositionally biased toward gly residues; sequence AAGGGPGAAS.

It belongs to the MurB family. FAD serves as cofactor.

It localises to the cytoplasm. It carries out the reaction UDP-N-acetyl-alpha-D-muramate + NADP(+) = UDP-N-acetyl-3-O-(1-carboxyvinyl)-alpha-D-glucosamine + NADPH + H(+). It functions in the pathway cell wall biogenesis; peptidoglycan biosynthesis. Functionally, cell wall formation. The sequence is that of UDP-N-acetylenolpyruvoylglucosamine reductase from Anaeromyxobacter dehalogenans (strain 2CP-1 / ATCC BAA-258).